Reading from the N-terminus, the 395-residue chain is Tyrosine--tRNA ligase (395 aa).

The 'HIGH' region motif lies at 42-51 (PTAPDIHLGH). The 'KMSKS' region motif lies at 226 to 230 (KMSKS). Residue Lys-229 coordinates ATP. The S4 RNA-binding domain occupies 334 to 394 (IGLANLLKEA…GKRKFARVTV (61 aa)).

Belongs to the class-I aminoacyl-tRNA synthetase family. TyrS type 2 subfamily. In terms of assembly, homodimer.

Its subcellular location is the cytoplasm. It carries out the reaction tRNA(Tyr) + L-tyrosine + ATP = L-tyrosyl-tRNA(Tyr) + AMP + diphosphate + H(+). In terms of biological role, catalyzes the attachment of tyrosine to tRNA(Tyr) in a two-step reaction: tyrosine is first activated by ATP to form Tyr-AMP and then transferred to the acceptor end of tRNA(Tyr). This chain is Tyrosine--tRNA ligase, found in Mannheimia succiniciproducens (strain KCTC 0769BP / MBEL55E).